An 85-amino-acid polypeptide reads, in one-letter code: Large ribosomal subunit protein bL27 (85 aa).

The disordered stretch occupies residues 1 to 20 (MATKKAGGSTRNGRDSEAKR).

Belongs to the bacterial ribosomal protein bL27 family.

The protein is Large ribosomal subunit protein bL27 of Histophilus somni (strain 129Pt) (Haemophilus somnus).